We begin with the raw amino-acid sequence, 801 residues long: DNA mismatch repair protein MutS (801 aa).

590-597 (GPNMSGKS) contacts ATP.

The protein belongs to the DNA mismatch repair MutS family.

In terms of biological role, this protein is involved in the repair of mismatches in DNA. It is possible that it carries out the mismatch recognition step. This protein has a weak ATPase activity. The chain is DNA mismatch repair protein MutS from Thermotoga neapolitana (strain ATCC 49049 / DSM 4359 / NBRC 107923 / NS-E).